The following is a 177-amino-acid chain: MNGGHIQLIIGPMFSGKSTELIRRVRRYQIAQYKCVTIKYSNDNRYGTGLWTHDKNNFEALEATKLCDVLESITDFSVIGIDEGQFFPDIVEFCERMANEGKIVIVAALDGTFQRKPFNNILNLIPLSEMVVKLTAVCMKCFKEASFSKRLGEETEIEIIGGNDMYQSVCRKCYVGS.

11-18 lines the ATP pocket; it reads GPMFSGKS. The Proton acceptor role is filled by Glu-83. Residue Phe-113 participates in substrate binding. Zn(2+) is bound by residues Cys-138 and Cys-141. 157 to 161 is a substrate binding site; sequence IEIIG. The Zn(2+) site is built by Cys-170 and Cys-173.

Belongs to the thymidine kinase family. In terms of assembly, homotetramer. Two molecules of substrate bind to each enzyme tetramer.

It carries out the reaction thymidine + ATP = dTMP + ADP + H(+). Phosphorylates thymidine and thymidine analogs, such as azidothymidine (AZT). Part of the salvage pathway for pyrimidine deoxyribonucleotide synthesis. The polypeptide is Thymidine kinase (OPG101) (Homo sapiens (Human)).